The primary structure comprises 441 residues: Peroxisome proliferator-activated receptor delta (441 aa).

The interval 1-58 (MEQPPGEAAEVREEEEKKEVAEAEGAPELNGGPERSLPSSSYTDLSRSSSPPSLLDQL) is disordered. The span at 9 to 21 (AEVREEEEKKEVA) shows a compositional bias: basic and acidic residues. A compositionally biased stretch (low complexity) spans 36 to 55 (SLPSSSYTDLSRSSSPPSLL). The nuclear receptor DNA-binding region spans 70-145 (LNMECRVCGD…LGMSHNAIRF (76 aa)). 2 consecutive NR C4-type zinc fingers follow at residues 74-94 (CRVCGDKASGFHYGVHACEGC) and 111-133 (CERICKIQKKNRNKCQYCRFQKC). The region spanning 211–439 (FVIHDIETLW…HPLLQEIYKD (229 aa)) is the NR LBD domain.

Belongs to the nuclear hormone receptor family. NR1 subfamily. As to quaternary structure, heterodimer with the retinoid X receptor. Interacts (via domain NR LBD) with CRY1 and CRY2 in a ligand-dependent manner. 'Lys-48'-linked polyubiquitinated; leading to proteasomal degradation. Deubiquitinated and stabilized by OTUD3.

It is found in the nucleus. Ligand-activated transcription factor key mediator of energy metabolism in adipose tissues. Receptor that binds peroxisome proliferators such as hypolipidemic drugs and fatty acids. Has a preference for poly-unsaturated fatty acids, such as gamma-linoleic acid and eicosapentanoic acid. Once activated by a ligand, the receptor binds to promoter elements of target genes. Regulates the peroxisomal beta-oxidation pathway of fatty acids. Functions as a transcription activator for the acyl-CoA oxidase gene. Decreases expression of NPC1L1 once activated by a ligand. The sequence is that of Peroxisome proliferator-activated receptor delta (PPARD) from Canis lupus familiaris (Dog).